Reading from the N-terminus, the 192-residue chain is Xanthine phosphoribosyltransferase (192 aa).

Residues leucine 20 and asparagine 27 each contribute to the xanthine site. Residue 128 to 132 (ANGQA) participates in 5-phospho-alpha-D-ribose 1-diphosphate binding. Xanthine is bound at residue lysine 156.

It belongs to the purine/pyrimidine phosphoribosyltransferase family. Xpt subfamily. Homodimer.

The protein resides in the cytoplasm. The enzyme catalyses XMP + diphosphate = xanthine + 5-phospho-alpha-D-ribose 1-diphosphate. It participates in purine metabolism; XMP biosynthesis via salvage pathway; XMP from xanthine: step 1/1. In terms of biological role, converts the preformed base xanthine, a product of nucleic acid breakdown, to xanthosine 5'-monophosphate (XMP), so it can be reused for RNA or DNA synthesis. The protein is Xanthine phosphoribosyltransferase of Listeria monocytogenes serotype 4b (strain CLIP80459).